A 554-amino-acid chain; its full sequence is Chaperonin GroEL (554 aa).

ATP contacts are provided by residues 29–32 (TLGP), lysine 50, 86–90 (DGTTT), glycine 414, and aspartate 495.

The protein belongs to the chaperonin (HSP60) family. Forms a cylinder of 14 subunits composed of two heptameric rings stacked back-to-back. Interacts with the co-chaperonin GroES.

It localises to the cytoplasm. The catalysed reaction is ATP + H2O + a folded polypeptide = ADP + phosphate + an unfolded polypeptide.. Together with its co-chaperonin GroES, plays an essential role in assisting protein folding. The GroEL-GroES system forms a nano-cage that allows encapsulation of the non-native substrate proteins and provides a physical environment optimized to promote and accelerate protein folding. In Pelagibacter ubique (strain HTCC1062), this protein is Chaperonin GroEL.